A 91-amino-acid chain; its full sequence is Elongation factor 1-beta (91 aa).

It belongs to the EF-1-beta/EF-1-delta family.

Promotes the exchange of GDP for GTP in EF-1-alpha/GDP, thus allowing the regeneration of EF-1-alpha/GTP that could then be used to form the ternary complex EF-1-alpha/GTP/AAtRNA. This chain is Elongation factor 1-beta, found in Caldivirga maquilingensis (strain ATCC 700844 / DSM 13496 / JCM 10307 / IC-167).